The primary structure comprises 967 residues: Leucine-rich repeat-containing G-protein coupled receptor 6 (967 aa).

Residues 1–24 (MPSPPGLRALWLCAALCASRRAGG) form the signal peptide. The Extracellular segment spans residues 25-567 (APQPGPGPTA…LFESWGIRLA (543 aa)). Positions 26-66 (PQPGPGPTACPAPCHCQEDGIMLSADCSELGLSAVPGDLDP) constitute an LRRNT domain. A glycan (N-linked (GlcNAc...) asparagine) is linked at asparagine 77. LRR repeat units lie at residues 91–112 (FLEE…AFSG), 115–136 (SLKI…ALWE), 139–160 (SLQS…SFEG), 163–186 (SLRH…NNLP), 187–208 (ALQA…AFQN), 211–232 (SLVV…SFEG), 235–256 (NLET…IRTL), 258–279 (RLQE…AFMG), 282–303 (LLQT…AFQY), 306–328 (KLHT…KGTT), 329–350 (SLEI…MCQQ), 353–374 (RLRV…HRCQ), 375–396 (KLEE…TFSQ), 399–420 (SLQA…AFST), and 423–443 (SLVK…AGLG). Residue asparagine 208 is glycosylated (N-linked (GlcNAc...) asparagine). Residues 568 to 588 (VWAIVLLSVLCNGLVLLTVFA) traverse the membrane as a helical segment. Over 589-598 (GGPVPLPPVK) the chain is Cytoplasmic. The chain crosses the membrane as a helical span at residues 599-619 (FVVGAIAGANTLTGISCGLLA). The Extracellular segment spans residues 620–644 (SVDALTFGQFSEYGARWETGLGCRA). Cysteines 642 and 717 form a disulfide. A helical transmembrane segment spans residues 645–665 (TGFLAVLGSEASVLLLTLAAV). Residues 666–687 (QCSVSVSCVRAYGKSPSLGSVR) lie on the Cytoplasmic side of the membrane. The helical transmembrane segment at 688 to 708 (AGVLGCLALAGLAAALPLASV) threads the bilayer. Residues 709 to 727 (GEYGASPLCLPYAPPEGQP) lie on the Extracellular side of the membrane. Residues 728 to 748 (AALGFTVALVMMNSFCFLVVA) traverse the membrane as a helical segment. Residues 749–774 (GAYIKLYCDLPRGDFEAVWDCAMVRH) lie on the Cytoplasmic side of the membrane. A helical membrane pass occupies residues 775–795 (VAWLIFADGLLYCPVAFLSFA). The Extracellular portion of the chain corresponds to 796–809 (SMLGLFPVTPEAVK). The helical transmembrane segment at 810-830 (SVLLVVLPLPACLNPLLYLLF) threads the bilayer. The Cytoplasmic portion of the chain corresponds to 831 to 967 (NPHFRDDLRR…PSGLAFASHV (137 aa)).

It belongs to the G-protein coupled receptor 1 family.

The protein resides in the cell membrane. In terms of biological role, receptor for R-spondins that potentiates the canonical Wnt signaling pathway and acts as a marker of multipotent stem cells in the epidermis. Upon binding to R-spondins (RSPO1, RSPO2, RSPO3 or RSPO4), associates with phosphorylated LRP6 and frizzled receptors that are activated by extracellular Wnt receptors, triggering the canonical Wnt signaling pathway to increase expression of target genes. In contrast to classical G-protein coupled receptors, does not activate heterotrimeric G-proteins to transduce the signal. May act as a tumor suppressor. The chain is Leucine-rich repeat-containing G-protein coupled receptor 6 (LGR6) from Homo sapiens (Human).